The primary structure comprises 289 residues: Cyclo(L-tyrosyl-L-tyrosyl) synthase (289 aa).

The tract at residues 1 to 48 (MSYVAAEPGVLISPTDDLQSPRSAPAAHDENADGITGGTRDDSAPNSR) is disordered. The active-site Nucleophile is serine 88. Substrate is bound by residues asparagine 91, 229–233 (YICAE), and tyrosine 253.

This sequence belongs to the CDPS family. In terms of assembly, homodimer.

It carries out the reaction 2 L-tyrosyl-tRNA(Tyr) = cyclo(L-tyrosyl-L-tyrosyl) + 2 tRNA(Tyr). Its function is as follows. Involved in the biosynthesis of mycocyclosin. It uses activated amino acids in the form of aminoacyl-tRNAs (aa-tRNAs) as substrates to catalyze the ATP-independent formation of cyclodipeptides which are intermediates in diketopiperazine (DKP) biosynthetic pathways. Catalyzes the formation of cyclo(L-Tyr-L-Tyr) (cYY) from L-tyrosyl-tRNA(Tyr). The sequence is that of Cyclo(L-tyrosyl-L-tyrosyl) synthase from Mycobacterium tuberculosis (strain CDC 1551 / Oshkosh).